A 234-amino-acid polypeptide reads, in one-letter code: Glucosamine-6-phosphate deaminase (234 aa).

Residue D63 is the Proton acceptor; for enolization step of the active site. N129 functions as the For ring-opening step in the catalytic mechanism. Catalysis depends on H131, which acts as the Proton acceptor; for ring-opening step. E136 acts as the For ring-opening step in catalysis.

This sequence belongs to the glucosamine/galactosamine-6-phosphate isomerase family. NagB subfamily.

It catalyses the reaction alpha-D-glucosamine 6-phosphate + H2O = beta-D-fructose 6-phosphate + NH4(+). Its pathway is amino-sugar metabolism; N-acetylneuraminate degradation; D-fructose 6-phosphate from N-acetylneuraminate: step 5/5. Catalyzes the reversible isomerization-deamination of glucosamine 6-phosphate (GlcN6P) to form fructose 6-phosphate (Fru6P) and ammonium ion. The protein is Glucosamine-6-phosphate deaminase of Listeria monocytogenes serotype 4b (strain CLIP80459).